The following is a 208-amino-acid chain: Anti-sigma-W factor RsiW (208 aa).

Over 1-87 the chain is Cytoplasmic; it reads MSCPEQIVQL…ASVKRWFRTH (87 aa). 4 residues coordinate Zn(2+): C3, H30, C34, and C37. A helical membrane pass occupies residues 88-108; that stretch reads PVIAAAAVFIILMGGGFFNSW. Over 109–208 the chain is Extracellular; it reads HNDHNFSVSK…LDAFNPNGEE (100 aa).

It belongs to the zinc-associated anti-sigma factor (ZAS) superfamily. Anti-sigma-W factor family. As to quaternary structure, forms a heterodimer with cognate sigma factor SigW, which probably prevents SigW from binding to DNA. It depends on Zn(2+) as a cofactor. Post-translationally, is processed by successive proteolytic events. First, the extracellular region of RsiW is cleaved by PrsW (site-1 cleavage) in response to cell envelope stresses. In a reconstituted E.coli system PrsW cuts between Ala-168 and Ser-169 followed by trimming by E.coli Tsp; the endogenous extracellular exopeptidase responsible for the event in B.subtilis has not been identified. Next, it undergoes cleavage at an intramembrane site (site-2 cleavage) mediated by RasP. This cleavage uncovers a cryptic proteolytic tag with conserved alanine residues in the transmembrane segment, that is recognized mainly by the ClpXP protease, which completely degrades the protein in the cytoplasm and leads to the induction of the sigma-W-controlled genes.

Its subcellular location is the cell membrane. Functionally, the anti-sigma factor for extracytoplasmic function (ECF) sigma factor sigma-W (SigW). Holds SigW, its cognate ECF sigma factor, in an inactive form until released by regulated intramembrane proteolysis (RIP). SigW and RsiW mediate cell response to cell wall stress. RIP occurs when an extracytoplasmic signal triggers a concerted proteolytic cascade to transmit information and elicit cellular responses. The membrane-spanning regulatory substrate protein is first cut periplasmically (site-1 protease, S1P, PrsW), then within the membrane itself (site-2 protease, S2P, RasP), while cytoplasmic proteases finish degrading the anti-sigma factor, liberating sigma-W. This chain is Anti-sigma-W factor RsiW (rsiW), found in Bacillus subtilis (strain 168).